Consider the following 279-residue polypeptide: Nitrate import permease protein NrtB (279 aa).

5 helical membrane passes run 25–45, 91–111, 149–169, 200–220, and 249–269; these read FLPY…ISAI, VAIG…VLGM, AIFV…AVGI, VPYV…AIVA, and IILA…LVAW. The ABC transmembrane type-1 domain maps to 84–267; it reads ILISLQRVAI…LVGLSLDRLV (184 aa).

Belongs to the binding-protein-dependent transport system permease family. CysTW subfamily. As to quaternary structure, the complex is composed of two ATP-binding proteins (NrtC and NrtD), two transmembrane proteins (NrtB) and a solute-binding protein (NrtA).

It is found in the cell inner membrane. Its function is as follows. Part of the ABC transporter complex NrtABCD involved in nitrate uptake. The complex is probably also involved in nitrite transport. Probably responsible for the translocation of the substrate across the membrane. The sequence is that of Nitrate import permease protein NrtB from Synechococcus elongatus (strain ATCC 33912 / PCC 7942 / FACHB-805) (Anacystis nidulans R2).